The following is a 533-amino-acid chain: D-3-phosphoglycerate dehydrogenase (533 aa).

Ala2 carries the post-translational modification N-acetylalanine. Ser14 bears the Phosphoserine mark. The residue at position 58 (Lys58) is an N6-acetyllysine. NAD(+) contacts are provided by residues Thr78, 155-156 (RI), Asp175, Thr207, 234-236 (CAR), and Asp260. The residue at position 78 (Thr78) is a Phosphothreonine. Arg236 is a catalytic residue. Residue Glu265 is part of the active site. His283 (proton donor) is an active-site residue. 283–286 (HLGA) is a binding site for NAD(+).

The protein belongs to the D-isomer specific 2-hydroxyacid dehydrogenase family. Homotetramer.

It catalyses the reaction (2R)-3-phosphoglycerate + NAD(+) = 3-phosphooxypyruvate + NADH + H(+). It carries out the reaction (R)-2-hydroxyglutarate + NAD(+) = 2-oxoglutarate + NADH + H(+). The catalysed reaction is (S)-malate + NAD(+) = oxaloacetate + NADH + H(+). It participates in amino-acid biosynthesis; L-serine biosynthesis; L-serine from 3-phospho-D-glycerate: step 1/3. Functionally, catalyzes the reversible oxidation of 3-phospho-D-glycerate to 3-phosphonooxypyruvate, the first step of the phosphorylated L-serine biosynthesis pathway. Also catalyzes the reversible oxidation of 2-hydroxyglutarate to 2-oxoglutarate and the reversible oxidation of (S)-malate to oxaloacetate. The polypeptide is D-3-phosphoglycerate dehydrogenase (PHGDH) (Sus scrofa (Pig)).